Here is a 289-residue protein sequence, read N- to C-terminus: Oxaloacetate decarboxylase (289 aa).

A substrate-binding site is contributed by S50. Residue D88 coordinates Mg(2+). Residues R159 and H235 each coordinate substrate.

This sequence belongs to the isocitrate lyase/PEP mutase superfamily. Oxaloacetate decarboxylase family. Homotetramer; dimer of dimers. Requires Mg(2+) as cofactor.

The catalysed reaction is oxaloacetate + H(+) = pyruvate + CO2. In terms of biological role, catalyzes the decarboxylation of oxaloacetate into pyruvate. Seems to play a role in maintaining cellular concentrations of bicarbonate and pyruvate. In Pseudomonas fluorescens (strain ATCC BAA-477 / NRRL B-23932 / Pf-5), this protein is Oxaloacetate decarboxylase.